Reading from the N-terminus, the 92-residue chain is Kinetoplastid membrane protein 11B (92 aa).

Belongs to the KMP-11 family. As to quaternary structure, monomer.

The protein resides in the cytoplasm. It localises to the cytoskeleton. Its subcellular location is the cell projection. It is found in the cilium. The protein localises to the flagellum. Its function is as follows. May be involved in the regulation of the cytoskeleton through interaction with the subpellicular microtubules. May be involved in parasite mobility and attachment to the surface of the host cell. Behaves as a strong immunogen during infection. This is Kinetoplastid membrane protein 11B (KMP-11B) from Leishmania infantum.